The sequence spans 925 residues: Leucine--tRNA ligase (925 aa).

Residues 40 to 51 (PYPSGAGLHVGH) carry the 'HIGH' region motif. The 'KMSKS' region motif lies at 700 to 704 (KMSKS). Lys-703 lines the ATP pocket.

Belongs to the class-I aminoacyl-tRNA synthetase family.

Its subcellular location is the cytoplasm. The enzyme catalyses tRNA(Leu) + L-leucine + ATP = L-leucyl-tRNA(Leu) + AMP + diphosphate. This Porphyromonas gingivalis (strain ATCC 33277 / DSM 20709 / CIP 103683 / JCM 12257 / NCTC 11834 / 2561) protein is Leucine--tRNA ligase.